We begin with the raw amino-acid sequence, 504 residues long: ATP synthase subunit alpha, chloroplastic (504 aa).

Position 170-177 (170-177 (GDRQTGKT)) interacts with ATP.

The protein belongs to the ATPase alpha/beta chains family. F-type ATPases have 2 components, CF(1) - the catalytic core - and CF(0) - the membrane proton channel. CF(1) has five subunits: alpha(3), beta(3), gamma(1), delta(1), epsilon(1). CF(0) has four main subunits: a, b, b' and c.

It localises to the plastid. The protein resides in the chloroplast thylakoid membrane. The enzyme catalyses ATP + H2O + 4 H(+)(in) = ADP + phosphate + 5 H(+)(out). In terms of biological role, produces ATP from ADP in the presence of a proton gradient across the membrane. The alpha chain is a regulatory subunit. This chain is ATP synthase subunit alpha, chloroplastic, found in Hordeum vulgare (Barley).